The sequence spans 2541 residues: Talin-1 (2541 aa).

The region spanning 86–403 (RPLKIRMLDG…GYIDIILKKK (318 aa)) is the FERM domain. Thr-167 is subject to Phosphothreonine. An interaction with LAYN region spans residues 280–435 (FQAHKNCGQM…PKKSTVLQQQ (156 aa)). Phosphoserine is present on residues Ser-405, Ser-425, Ser-446, Ser-620, and Ser-729. The interval 482–655 (RGHMPPLTSA…QASGELLQQI (174 aa)) is helical bundle R1. The helical bundle R2 stretch occupies residues 656–786 (GESDTDPHFQ…ALNELLQHVK (131 aa)). Residues 787–911 (AHATGAGPAG…NAAAQNAIKK (125 aa)) form a helical bundle R3 region. A helical bundle R4 region spans residues 913-1044 (LVQRLEHAAK…RTAAQKAQEA (132 aa)). Residue Ser-1021 is modified to Phosphoserine. Residues 1046 to 1206 (GPLEMDSALS…NRCVSCLPGQ (161 aa)) are helical bundle R5. At Tyr-1116 the chain carries Phosphotyrosine. Thr-1142 carries the phosphothreonine modification. Phosphoserine occurs at positions 1201 and 1225. The tract at residues 1207–1357 (RDVDNALRAV…QLITMCTQQA (151 aa)) is helical bundle R6. The residue at position 1263 (Thr-1263) is a Phosphothreonine. A phosphoserine mark is found at Ser-1323 and Ser-1328. Residues 1327 to 1948 (ASPNLKSQLA…CSPSDVYTKK (622 aa)) are interaction with SYNM. Residues 1358 to 1453 (PGQKECDNAL…AYLVGVSDPN (96 aa)) form a helical bundle R7A; Interaction with KANK1 region. The tract at residues 1359-1659 (GQKECDNALR…SMRDKAPGQL (301 aa)) is interaction with VCL and F-actin. Residues 1461–1580 (LVEPTQFARA…NLSAFASNPE (120 aa)) are helical bundle R8. Residue Lys-1544 is modified to N6-acetyllysine. Residues 1581–1653 (FSSVPAQISP…IKKLITSMRD (73 aa)) are helical bundle R7B; Interaction with KANK1. Positions 1655–1822 (APGQLECETA…TLNEAASAAG (168 aa)) are helical bundle R9. The tract at residues 1823-1973 (VVGGMVDSIT…VLAALQAGNR (151 aa)) is helical bundle R10. Ser-1849 is subject to Phosphoserine. At Thr-1855 the chain carries Phosphothreonine. Ser-1878 is subject to Phosphoserine. Positions 1974 to 2140 (GTQACITAAS…TVKAVEDEAT (167 aa)) are helical bundle R11. Lys-2031 is modified (N6-acetyllysine). Ser-2040 is modified (phosphoserine). Lys-2115 carries the N6-acetyllysine modification. The helical bundle R12 stretch occupies residues 2141–2294 (KGTRALEATT…QAAEAMKGTE (154 aa)). Residues 2293-2533 (TEWVDPEDPT…QIRQQQYKFL (241 aa)) enclose the I/LWEQ domain. Residues 2300 to 2482 (DPTVIAENEL…AAQKAAAFED (183 aa)) are helical bundle R13.

As to quaternary structure, part of a complex composed of THSD1, PTK2/FAK1, TLN1 and VCL. Interacts with THSD1; this promotes interaction with PTK2/FAK1 and VCL. Interacts with NRAP and LAYN. Interacts with SYNM. Interacts with ITGB1; the interaction is prevented by competitive binding of ITGB1BP1. Binds with high affinity to VCL and with low affinity to integrins. Interacts with APBB1IP; this inhibits VCL binding. Interacts with PTK2/FAK1. Interacts with PIP5K1C. Interacts with F-actin. Interacts with SVEP1. Interacts (via R7 domain) with KANK1 or KANK2 (via KN motif); this interaction likely initiates the assembly of cortical microtubule stabilization complexes (CMSCs) at the vicinity of focal adhesions.

Its subcellular location is the cell projection. It localises to the ruffle membrane. The protein localises to the cytoplasm. The protein resides in the cytoskeleton. It is found in the cell surface. Its subcellular location is the cell junction. It localises to the focal adhesion. High molecular weight cytoskeletal protein concentrated at regions of cell-matrix and cell-cell contacts. Involved in connections of major cytoskeletal structures to the plasma membrane. With KANK1 co-organize the assembly of cortical microtubule stabilizing complexes (CMSCs) positioned to control microtubule-actin crosstalk at focal adhesions (FAs) rims. In Mus musculus (Mouse), this protein is Talin-1 (Tln1).